Consider the following 491-residue polypeptide: Protein DETOXIFICATION 20 (491 aa).

The next 12 membrane-spanning stretches (helical) occupy residues 37 to 57 (LWVV…VSMV), 75 to 95 (ITFT…AGAL), 120 to 140 (IVLT…GPIL), 156 to 176 (LALW…CQMF), 185 to 205 (IISY…WLLV), 214 to 234 (GAMT…LLYV), 265 to 285 (GGML…TGNL), 296 to 316 (AICI…LAAV), 337 to 357 (LIAV…FLFL), 381 to 401 (LLAF…VAIG), 413 to 433 (LACY…VVGL), and 438 to 458 (VWIG…VMTL).

Belongs to the multi antimicrobial extrusion (MATE) (TC 2.A.66.1) family.

The protein localises to the membrane. The polypeptide is Protein DETOXIFICATION 20 (Arabidopsis thaliana (Mouse-ear cress)).